The primary structure comprises 190 residues: Pancreatic IgW, short secretory form (190 aa).

The Ig-like C1-type domain occupies 53–145 (PNITALVPSV…PPSNFRSMIS (93 aa)). A glycan (N-linked (GlcNAc...) asparagine) is linked at N54. The cysteines at positions 74 and 131 are disulfide-linked. N179 carries an N-linked (GlcNAc...) asparagine glycan.

As to expression, expressed in pancreas, spleen, epigonal organ and at low levels in several other tissues.

The protein localises to the secreted. The chain is Pancreatic IgW, short secretory form from Ginglymostoma cirratum (Nurse shark).